Reading from the N-terminus, the 609-residue chain is UvrABC system protein C (609 aa).

Residues 16–94 (HLPGVYRHLD…IKSLRPRYNI (79 aa)) enclose the GIY-YIG domain. One can recognise a UVR domain in the interval 203–238 (REVMDEIEARMLQASTELRFEEAAVLRDQMGSLSKV).

It belongs to the UvrC family. In terms of assembly, interacts with UvrB in an incision complex.

Its subcellular location is the cytoplasm. Its function is as follows. The UvrABC repair system catalyzes the recognition and processing of DNA lesions. UvrC both incises the 5' and 3' sides of the lesion. The N-terminal half is responsible for the 3' incision and the C-terminal half is responsible for the 5' incision. This Bordetella bronchiseptica (strain ATCC BAA-588 / NCTC 13252 / RB50) (Alcaligenes bronchisepticus) protein is UvrABC system protein C.